The primary structure comprises 38 residues: Large ribosomal subunit protein bL36 (38 aa).

This sequence belongs to the bacterial ribosomal protein bL36 family.

This Chlorobium phaeobacteroides (strain BS1) protein is Large ribosomal subunit protein bL36.